The sequence spans 149 residues: MAIAAVDANDRVHQLILLTERLTDLIAKQAVAFETHRPHQAAQYVEETSKLANLYRHESMRVRANVGLVESARLELRQRLMRATEAFDAVLARQSRAVEAAKIVTEGLVHAIAQEVASQRAAPATTYGAGGMVNDRPQHGAAITLNRKA.

As to quaternary structure, the basal body constitutes a major portion of the flagellar organelle and consists of five rings (E,L,P,S, and M) mounted on a central rod.

It localises to the bacterial flagellum basal body. This is Flagellar basal-body protein FlbY (flbY) from Caulobacter vibrioides (strain ATCC 19089 / CIP 103742 / CB 15) (Caulobacter crescentus).